A 239-amino-acid polypeptide reads, in one-letter code: MVQHLTAEEIIQYISDAKKSTPLKVYINGDFENITFPSDFKVFGSSDSKVIFCEADDWKPFYESNQSVIDEIEVEMDRSNSAIPLKDLTNTNARIEPGAFIREQAIIEDGAVIMMGATINIGAVVGEGTMVDMNATLGGRATTGKNVHVGAGSVLAGVIEPPSASPVVIEDDVLIGANAVILEGVCVGAGAIVAAGAIVTQDVPAGAVVAGTPAKVIKQTTEVEDSKREIVSALRKLND.

It belongs to the transferase hexapeptide repeat family. DapH subfamily.

The catalysed reaction is (S)-2,3,4,5-tetrahydrodipicolinate + acetyl-CoA + H2O = L-2-acetamido-6-oxoheptanedioate + CoA. Its pathway is amino-acid biosynthesis; L-lysine biosynthesis via DAP pathway; LL-2,6-diaminopimelate from (S)-tetrahydrodipicolinate (acetylase route): step 1/3. In terms of biological role, catalyzes the transfer of an acetyl group from acetyl-CoA to tetrahydrodipicolinate. This chain is 2,3,4,5-tetrahydropyridine-2,6-dicarboxylate N-acetyltransferase, found in Staphylococcus saprophyticus subsp. saprophyticus (strain ATCC 15305 / DSM 20229 / NCIMB 8711 / NCTC 7292 / S-41).